The chain runs to 307 residues: Phosphate import ATP-binding protein PstB (307 aa).

Residues 1 to 30 (MSETTYTTTEDTDDTNSTDSMVGTTTGETD) are disordered. The region spanning 48 to 302 (LGVDDLDVYY…PQSERVEDYI (255 aa)) is the ABC transporter domain. Position 80 to 87 (80 to 87 (GPSGCGKS)) interacts with ATP.

The protein belongs to the ABC transporter superfamily. Phosphate importer (TC 3.A.1.7) family. As to quaternary structure, the complex is composed of two ATP-binding proteins (PstB), two transmembrane proteins (PstC and PstA) and a solute-binding protein (PstS).

The protein resides in the cell membrane. It catalyses the reaction phosphate(out) + ATP + H2O = ADP + 2 phosphate(in) + H(+). Functionally, part of the ABC transporter complex PstSACB involved in phosphate import. Responsible for energy coupling to the transport system. This Haloquadratum walsbyi (strain DSM 16790 / HBSQ001) protein is Phosphate import ATP-binding protein PstB.